We begin with the raw amino-acid sequence, 235 residues long: MOB kinase activator 2 (235 aa).

A disordered region spans residues 1 to 22 (MDWLMGKSKAKPNGKKPAAEEK). 4 residues coordinate Zn(2+): cysteine 78, cysteine 83, histidine 157, and histidine 162. Residues 213-235 (NSGATGDGANSGASGAQNHVKER) are disordered.

This sequence belongs to the MOB1/phocein family. In terms of assembly, binds STK38 and STK38L. Post-translationally, phosphorylated.

It is found in the nucleus. Its subcellular location is the cytoplasm. The protein localises to the perinuclear region. Functionally, stimulates the autophosphorylation and kinase activity of STK38 and STK38L. This chain is MOB kinase activator 2 (Mob2), found in Mus musculus (Mouse).